Here is a 544-residue protein sequence, read N- to C-terminus: Chaperonin GroEL (544 aa).

ATP-binding positions include 29 to 32 (TLGP), lysine 50, 86 to 90 (DGTTT), glycine 414, and aspartate 495.

This sequence belongs to the chaperonin (HSP60) family. Forms a cylinder of 14 subunits composed of two heptameric rings stacked back-to-back. Interacts with the co-chaperonin GroES.

The protein resides in the cytoplasm. It carries out the reaction ATP + H2O + a folded polypeptide = ADP + phosphate + an unfolded polypeptide.. Its function is as follows. Together with its co-chaperonin GroES, plays an essential role in assisting protein folding. The GroEL-GroES system forms a nano-cage that allows encapsulation of the non-native substrate proteins and provides a physical environment optimized to promote and accelerate protein folding. The polypeptide is Chaperonin GroEL (Treponema pallidum subsp. pallidum (strain SS14)).